The primary structure comprises 198 residues: Protein ORFi in retron Ec67 (198 aa).

This sequence belongs to the CI repressor protein family.

The chain is Protein ORFi in retron Ec67 from Escherichia coli.